The chain runs to 453 residues: uncharacterized protein (453 aa).

[4Fe-4S] cluster is bound by residues C74, C80, C83, and C162. S-adenosyl-L-methionine is bound by residues Q286, Y315, E336, and D384. C411 functions as the Nucleophile in the catalytic mechanism.

Belongs to the class I-like SAM-binding methyltransferase superfamily. RNA M5U methyltransferase family.

This is an uncharacterized protein from Staphylococcus aureus (strain MRSA252).